The chain runs to 412 residues: Gamma-glutamyl phosphate reductase (412 aa).

This sequence belongs to the gamma-glutamyl phosphate reductase family.

The protein resides in the cytoplasm. The enzyme catalyses L-glutamate 5-semialdehyde + phosphate + NADP(+) = L-glutamyl 5-phosphate + NADPH + H(+). It functions in the pathway amino-acid biosynthesis; L-proline biosynthesis; L-glutamate 5-semialdehyde from L-glutamate: step 2/2. Its function is as follows. Catalyzes the NADPH-dependent reduction of L-glutamate 5-phosphate into L-glutamate 5-semialdehyde and phosphate. The product spontaneously undergoes cyclization to form 1-pyrroline-5-carboxylate. This is Gamma-glutamyl phosphate reductase from Bartonella henselae (strain ATCC 49882 / DSM 28221 / CCUG 30454 / Houston 1) (Rochalimaea henselae).